The primary structure comprises 904 residues: Protein translocase subunit SecA (904 aa).

ATP contacts are provided by residues Gln-89, 107–111, and Asp-502; that span reads GEGKT. The segment at 872 to 892 is disordered; that stretch reads VESDPTTWGEPSRNDPCPCGS. Zn(2+) contacts are provided by Cys-888, Cys-890, Cys-899, and His-900.

Belongs to the SecA family. In terms of assembly, part of the essential protein translocation apparatus which comprises SecA, SecYEG and auxiliary proteins SecDF-YajC and YidC. Homodimer. Zn(2+) is required as a cofactor.

The protein localises to the cell inner membrane. The protein resides in the cytoplasm. The enzyme catalyses ATP + H2O + cellular proteinSide 1 = ADP + phosphate + cellular proteinSide 2.. Its function is as follows. Part of the Sec protein translocase complex. Interacts with the SecYEG preprotein conducting channel. Has a central role in coupling the hydrolysis of ATP to the transfer of proteins into and across the cell membrane, serving both as a receptor for the preprotein-SecB complex and as an ATP-driven molecular motor driving the stepwise translocation of polypeptide chains across the membrane. This Rhodobacter capsulatus (Rhodopseudomonas capsulata) protein is Protein translocase subunit SecA.